The following is a 166-amino-acid chain: Ribosome maturation factor RimP (166 aa).

This sequence belongs to the RimP family.

It is found in the cytoplasm. In terms of biological role, required for maturation of 30S ribosomal subunits. This chain is Ribosome maturation factor RimP, found in Psychrobacter cryohalolentis (strain ATCC BAA-1226 / DSM 17306 / VKM B-2378 / K5).